The sequence spans 162 residues: UPF0305 protein MmarC7_1691 (162 aa).

This sequence belongs to the UPF0305 family.

The sequence is that of UPF0305 protein MmarC7_1691 from Methanococcus maripaludis (strain C7 / ATCC BAA-1331).